Reading from the N-terminus, the 995-residue chain is KN motif and ankyrin repeat domain-containing protein 4 (995 aa).

Disordered stretches follow at residues Met-1 to Thr-29 and Thr-68 to Tyr-127. Positions Leu-101 to Glu-124 are enriched in polar residues. Residues Ser-343–Lys-404 adopt a coiled-coil conformation. Disordered stretches follow at residues Glu-443 to Ser-467, Glu-503 to Ala-558, Gln-617 to Lys-642, Leu-663 to Lys-705, and Pro-721 to Ser-740. A compositionally biased stretch (gly residues) spans Gly-511–Leu-523. Over residues Ser-526–Gly-549 the composition is skewed to basic and acidic residues. Over residues Pro-625–Ser-640 the composition is skewed to low complexity. A compositionally biased stretch (acidic residues) spans Thr-680–Ser-693. A compositionally biased stretch (basic and acidic residues) spans Glu-694–Lys-705. 5 ANK repeats span residues Asn-823–His-853, Val-862–Ile-890, Gly-895–Leu-924, Asp-928–Leu-958, and Ala-962–Ser-992.

As to expression, strongly expressed in colon, liver, lung, skeletal muscle and kidney.

It is found in the cytoplasm. May be involved in the control of cytoskeleton formation by regulating actin polymerization. This Homo sapiens (Human) protein is KN motif and ankyrin repeat domain-containing protein 4 (KANK4).